Here is a 156-residue protein sequence, read N- to C-terminus: Arginine repressor (156 aa).

This sequence belongs to the ArgR family.

The protein localises to the cytoplasm. Its pathway is amino-acid biosynthesis; L-arginine biosynthesis [regulation]. Regulates arginine biosynthesis genes. The sequence is that of Arginine repressor from Citrobacter koseri (strain ATCC BAA-895 / CDC 4225-83 / SGSC4696).